A 180-amino-acid chain; its full sequence is UPF0340 protein LL0489 (180 aa).

Belongs to the UPF0340 family.

The chain is UPF0340 protein LL0489 (yeiF) from Lactococcus lactis subsp. lactis (strain IL1403) (Streptococcus lactis).